The chain runs to 298 residues: L-xylulose reductase (298 aa).

Ile-19, Asp-68, and Asn-103 together coordinate NADP(+). Residues Ser-161, Ser-162, and Tyr-175 each act as proton donor in the active site. NADP(+)-binding residues include Tyr-175, Lys-179, and Val-207. The Lowers pKa of active site Tyr role is filled by Lys-179.

Belongs to the short-chain dehydrogenases/reductases (SDR) family.

The enzyme catalyses xylitol + NADP(+) = L-xylulose + NADPH + H(+). It functions in the pathway carbohydrate degradation; L-arabinose degradation via L-arabinitol; D-xylulose 5-phosphate from L-arabinose (fungal route): step 3/5. Its function is as follows. L-xylulose reductase involved in the catabolism of L-arabinose through an oxidoreductive pathway. Catalyzes the NADPH-dependent reduction of L-xylulose. This Aspergillus niger (strain ATCC 1015 / CBS 113.46 / FGSC A1144 / LSHB Ac4 / NCTC 3858a / NRRL 328 / USDA 3528.7) protein is L-xylulose reductase.